A 111-amino-acid chain; its full sequence is Cytochrome c6 (111 aa).

Residues methionine 1–alanine 25 form the signal peptide. Positions 39, 42, 43, and 83 each coordinate heme c.

It belongs to the cytochrome c family. PetJ subfamily. As to quaternary structure, monomer. Binds 1 heme c group covalently per subunit.

Its subcellular location is the cellular thylakoid lumen. In terms of biological role, functions as an electron carrier between membrane-bound cytochrome b6-f and photosystem I in oxygenic photosynthesis. The chain is Cytochrome c6 from Rippkaea orientalis (strain PCC 8801 / RF-1) (Cyanothece sp. (strain PCC 8801)).